The following is a 194-amino-acid chain: Imidazoleglycerol-phosphate dehydratase (194 aa).

This sequence belongs to the imidazoleglycerol-phosphate dehydratase family.

It localises to the cytoplasm. It catalyses the reaction D-erythro-1-(imidazol-4-yl)glycerol 3-phosphate = 3-(imidazol-4-yl)-2-oxopropyl phosphate + H2O. It functions in the pathway amino-acid biosynthesis; L-histidine biosynthesis; L-histidine from 5-phospho-alpha-D-ribose 1-diphosphate: step 6/9. The protein is Imidazoleglycerol-phosphate dehydratase of Listeria welshimeri serovar 6b (strain ATCC 35897 / DSM 20650 / CCUG 15529 / CIP 8149 / NCTC 11857 / SLCC 5334 / V8).